The primary structure comprises 122 residues: Large ribosomal subunit protein bL12 (122 aa).

It belongs to the bacterial ribosomal protein bL12 family. Homodimer. Part of the ribosomal stalk of the 50S ribosomal subunit. Forms a multimeric L10(L12)X complex, where L10 forms an elongated spine to which 2 to 4 L12 dimers bind in a sequential fashion. Binds GTP-bound translation factors.

Forms part of the ribosomal stalk which helps the ribosome interact with GTP-bound translation factors. Is thus essential for accurate translation. The polypeptide is Large ribosomal subunit protein bL12 (Staphylococcus epidermidis (strain ATCC 35984 / DSM 28319 / BCRC 17069 / CCUG 31568 / BM 3577 / RP62A)).